The chain runs to 151 residues: Transmembrane protein 239 (151 aa).

A run of 3 helical transmembrane segments spans residues 61–81 (LWGLEGTLYLLLALMLCHALF), 85–105 (SYLLSSLWPVVAVMWSHLLPA), and 116–138 (ALLFAASFLLLFSTLLSLVGLLT).

It localises to the membrane. The sequence is that of Transmembrane protein 239 (Tmem239) from Mus musculus (Mouse).